A 312-amino-acid polypeptide reads, in one-letter code: DNA-directed RNA polymerase subunit alpha (312 aa).

Residues 1-226 (MIEFEKPIIT…EHLNLFTDLT (226 aa)) are alpha N-terminal domain (alpha-NTD). Residues 243-312 (DEKVLDRTIE…DLGLGLKNDK (70 aa)) form an alpha C-terminal domain (alpha-CTD) region.

This sequence belongs to the RNA polymerase alpha chain family. Homodimer. The RNAP catalytic core consists of 2 alpha, 1 beta, 1 beta' and 1 omega subunit. When a sigma factor is associated with the core the holoenzyme is formed, which can initiate transcription.

It carries out the reaction RNA(n) + a ribonucleoside 5'-triphosphate = RNA(n+1) + diphosphate. Functionally, DNA-dependent RNA polymerase catalyzes the transcription of DNA into RNA using the four ribonucleoside triphosphates as substrates. The polypeptide is DNA-directed RNA polymerase subunit alpha (Streptococcus agalactiae serotype III (strain NEM316)).